Reading from the N-terminus, the 284-residue chain is GPN-loop GTPase 3 (284 aa).

GTP is bound at residue 13–18 (GSGKST). The short motif at 72 to 74 (GPN) is the Gly-Pro-Asn (GPN)-loop; involved in dimer interface element. 174 to 177 (TKMD) lines the GTP pocket. A disordered region spans residues 262 to 284 (EPREHEEESSSMFDEYFQERQNE).

This sequence belongs to the GPN-loop GTPase family. In terms of assembly, heterodimer with GPN1. Binds to RNA polymerase II (RNAPII). Interacts directly with subunits RPB4 and RPB7 and the CTD of RPB1.

Small GTPase required for proper localization of RNA polymerase II (RNAPII). May act at an RNAP assembly step prior to nuclear import. This Mus musculus (Mouse) protein is GPN-loop GTPase 3.